A 128-amino-acid polypeptide reads, in one-letter code: Large ribosomal subunit protein bL17 (128 aa).

It belongs to the bacterial ribosomal protein bL17 family. In terms of assembly, part of the 50S ribosomal subunit. Contacts protein L32.

In Streptococcus pyogenes serotype M5 (strain Manfredo), this protein is Large ribosomal subunit protein bL17.